The chain runs to 168 residues: Large ribosomal subunit protein uL16 (168 aa).

It belongs to the universal ribosomal protein uL16 family.

This chain is Large ribosomal subunit protein uL16, found in Thermofilum pendens (strain DSM 2475 / Hrk 5).